Reading from the N-terminus, the 201-residue chain is Recombination protein RecR (201 aa).

The segment at 57–72 adopts a C4-type zinc-finger fold; sequence CADCRTFTEQEHCTIC. In terms of domain architecture, Toprim spans 81–176; the sequence is GQICVVESPA…LASRIAHGVP (96 aa).

Belongs to the RecR family.

May play a role in DNA repair. It seems to be involved in an RecBC-independent recombinational process of DNA repair. It may act with RecF and RecO. This is Recombination protein RecR from Yersinia enterocolitica serotype O:8 / biotype 1B (strain NCTC 13174 / 8081).